A 129-amino-acid chain; its full sequence is Translation initiation factor 5A (129 aa).

The residue at position 36 (lysine 36) is a Hypusine.

This sequence belongs to the eIF-5A family.

Its subcellular location is the cytoplasm. Its function is as follows. Functions by promoting the formation of the first peptide bond. In Thermoplasma acidophilum (strain ATCC 25905 / DSM 1728 / JCM 9062 / NBRC 15155 / AMRC-C165), this protein is Translation initiation factor 5A (eif5a).